A 441-amino-acid polypeptide reads, in one-letter code: Glutamate-1-semialdehyde 2,1-aminomutase (441 aa).

Lysine 270 is subject to N6-(pyridoxal phosphate)lysine.

The protein belongs to the class-III pyridoxal-phosphate-dependent aminotransferase family. HemL subfamily. Homodimer. Pyridoxal 5'-phosphate is required as a cofactor.

Its subcellular location is the cytoplasm. The enzyme catalyses (S)-4-amino-5-oxopentanoate = 5-aminolevulinate. The protein operates within porphyrin-containing compound metabolism; protoporphyrin-IX biosynthesis; 5-aminolevulinate from L-glutamyl-tRNA(Glu): step 2/2. The sequence is that of Glutamate-1-semialdehyde 2,1-aminomutase (hemL) from Propionibacterium freudenreichii subsp. freudenreichii.